The following is a 427-amino-acid chain: UPF0415 protein C7orf25 homolog (427 aa).

Residues 200 to 234 show a composition bias toward acidic residues; it reads GGEEEDEEDQEGDHEDLVEEEEDGEDDNDDDSDDT. A disordered region spans residues 200–236; that stretch reads GGEEEDEEDQEGDHEDLVEEEEDGEDDNDDDSDDTDL.

Belongs to the UPF0415 family.

The polypeptide is UPF0415 protein C7orf25 homolog (Danio rerio (Zebrafish)).